The following is a 228-amino-acid chain: MAVETSHDAELTWSLVLPVKPLARAKTRMAEAAGPLRQALALAVAADTVAAALRCAAVAEVIVVTDDPLAAAELSALGARVVPDEPDCGLNPALAHGAALARAARPRAGVGAMSADLPALRPAELGRALAAAAGFAESFVADAQGVGTTLYAVRPGVPFSPAFGPGSRARHAAQGARELAIEGLDSLRRDVDTPGDLRAALALGTGPRTAALAARMPAFSPGAETSRG.

Phosphoenolpyruvate contacts are provided by Thr-148, Gly-164, and Ser-167.

This sequence belongs to the CofC family.

It carries out the reaction phosphoenolpyruvate + GTP + H(+) = enolpyruvoyl-2-diphospho-5'-guanosine + diphosphate. It participates in cofactor biosynthesis; coenzyme F420 biosynthesis. In terms of biological role, guanylyltransferase that catalyzes the activation of phosphoenolpyruvate (PEP) as enolpyruvoyl-2-diphospho-5'-guanosine, via the condensation of PEP with GTP. It is involved in the biosynthesis of coenzyme F420, a hydride carrier cofactor. The chain is Phosphoenolpyruvate guanylyltransferase from Thermomonospora curvata (strain ATCC 19995 / DSM 43183 / JCM 3096 / KCTC 9072 / NBRC 15933 / NCIMB 10081 / Henssen B9).